The primary structure comprises 355 residues: MTTSLDTVETFGPTSYDDDMGLLCEKADVGALIAQFVPPLYSLVFMVGLLGNVVVVMILIKYRRLRIMTNIYLLNLAISDLLFLFTLPFWIHYVRERNWVFSHGMCKVLSGFYHTGLYSEIFFIILLTIDRYLAIVHAVFALRARTVTFGVITSIVTWGLAVLAALPEFIFYGTEKLFPKTLCSAIYPQDTVYSWRHFHTLKMTILCLALPLLVMAICYTGIIKTLLRCPSKKKYKAIRLIFVIMAVFFIFWTPYNVAILISTYQSVLFGLDCERSKHLDLFVLATEVIAYSHCCVNPVIYAFVGERFRKYLRHFFHRHVLMHLGKYIPFLPSEKLERTSSVSPSTAEPELSIVF.

At methionine 1–alanine 34 the chain is on the extracellular side. A helical transmembrane segment spans residues glutamine 35–tyrosine 62. The Cytoplasmic segment spans residues arginine 63–tyrosine 72. A helical membrane pass occupies residues leucine 73 to tyrosine 93. Residues valine 94–lysine 107 are Extracellular-facing. A disulfide bond links cysteine 106 and cysteine 183. The helical transmembrane segment at valine 108–isoleucine 129 threads the bilayer. Residues aspartate 130–threonine 146 lie on the Cytoplasmic side of the membrane. Residues valine 147–phenylalanine 171 form a helical membrane-spanning segment. At tyrosine 172–methionine 203 the chain is on the extracellular side. A helical transmembrane segment spans residues threonine 204–isoleucine 223. At lysine 224–arginine 239 the chain is on the cytoplasmic side. A helical membrane pass occupies residues leucine 240–tyrosine 264. Residues glutamine 265–leucine 281 are Extracellular-facing. Residues phenylalanine 282–glycine 305 traverse the membrane as a helical segment. At glutamate 306–phenylalanine 355 the chain is on the cytoplasmic side.

The protein belongs to the G-protein coupled receptor 1 family.

Its subcellular location is the cell membrane. Its function is as follows. Receptor for C-C type chemokine. Binds and responds to a variety of chemokines, including CCL11, CCL26, CCL7, CCL13, RANTES(CCL5) and CCL15. Subsequently transduces a signal by increasing the intracellular calcium ions level. In addition acts as a possible functional receptor for NARS1. The chain is C-C chemokine receptor type 3 (CCR3) from Macaca mulatta (Rhesus macaque).